A 179-amino-acid polypeptide reads, in one-letter code: MQKAVVMDEQAIRRALTRIAHEIIERNKGIDGCVLVGIKTRGIYLARRLAERIEQIEGTSVPVGELDITLYRDDLTMKTEDHEPLVKGTNVPFPVSEQKVILVDDVLFTGRTVRAAMDAVMDLGRPARIQLAVLVDRGHRELPIRADFVGKNVPTSSAEVIVVELAEVDGVDQVSIHEK.

The PRPP-binding signature appears at 100–112 (VILVDDVLFTGRT).

Belongs to the purine/pyrimidine phosphoribosyltransferase family. PyrR subfamily. In terms of assembly, homodimer and homohexamer; in equilibrium.

It carries out the reaction UMP + diphosphate = 5-phospho-alpha-D-ribose 1-diphosphate + uracil. In terms of biological role, regulates transcriptional attenuation of the pyrimidine nucleotide (pyr) operon by binding in a uridine-dependent manner to specific sites on pyr mRNA. This disrupts an antiterminator hairpin in the RNA and favors formation of a downstream transcription terminator, leading to a reduced expression of downstream genes. Its function is as follows. Also displays a weak uracil phosphoribosyltransferase activity which is not physiologically significant. The chain is Bifunctional protein PyrR from Geobacillus thermodenitrificans (strain NG80-2).